Here is a 342-residue protein sequence, read N- to C-terminus: Glucokinase (342 aa).

ATP is bound at residue 7–12 (GDIGGT).

It belongs to the bacterial glucokinase family.

Its subcellular location is the cytoplasm. It carries out the reaction D-glucose + ATP = D-glucose 6-phosphate + ADP + H(+). The chain is Glucokinase from Trichormus variabilis (strain ATCC 29413 / PCC 7937) (Anabaena variabilis).